Reading from the N-terminus, the 228-residue chain is Small ribosomal subunit protein uS2 (228 aa).

It belongs to the universal ribosomal protein uS2 family.

The sequence is that of Small ribosomal subunit protein uS2 from Buchnera aphidicola subsp. Baizongia pistaciae (strain Bp).